A 302-amino-acid chain; its full sequence is Putative RING-H2 finger protein ATL35 (302 aa).

The signal sequence occupies residues 1–31 (MTIFARDLIYRIETKVLLPLFLVHLLPYVTC). A helical membrane pass occupies residues 50-70 (TVIAIIVLAIFISLSMVACFL). The RING-type; atypical zinc-finger motif lies at 123–165 (CAICLSEFVDKETLRWMPPCSHTFHANCIDVWLSSQSTCPACR). Residue S226 is modified to Phosphoserine.

This sequence belongs to the RING-type zinc finger family. ATL subfamily.

It localises to the membrane. The catalysed reaction is S-ubiquitinyl-[E2 ubiquitin-conjugating enzyme]-L-cysteine + [acceptor protein]-L-lysine = [E2 ubiquitin-conjugating enzyme]-L-cysteine + N(6)-ubiquitinyl-[acceptor protein]-L-lysine.. The protein operates within protein modification; protein ubiquitination. This is Putative RING-H2 finger protein ATL35 (ATL35) from Arabidopsis thaliana (Mouse-ear cress).